We begin with the raw amino-acid sequence, 105 residues long: N(4)-acetylcytidine amidohydrolase (105 aa).

Residues 8-93 (TFFEFLTPLV…ALIQEIYPNI (86 aa)) form the ASCH domain. Lys-22 serves as the catalytic Proton acceptor. Residue Thr-25 is the Nucleophile of the active site. Glu-75 functions as the Proton donor in the catalytic mechanism.

This sequence belongs to the N(4)-acetylcytidine amidohydrolase family.

It catalyses the reaction N(4)-acetylcytidine + H2O = cytidine + acetate + H(+). The enzyme catalyses N(4)-acetyl-2'-deoxycytidine + H2O = 2'-deoxycytidine + acetate + H(+). It carries out the reaction N(4)-acetylcytosine + H2O = cytosine + acetate + H(+). Functionally, catalyzes the hydrolysis of N(4)-acetylcytidine (ac4C). The protein is N(4)-acetylcytidine amidohydrolase of Vibrio cholerae serotype O1 (strain ATCC 39315 / El Tor Inaba N16961).